The sequence spans 226 residues: Ribonuclease 3 (226 aa).

One can recognise an RNase III domain in the interval 6-128 (INRLQRKLGY…LIGGIFLDSD (123 aa)). Glu-41 provides a ligand contact to Mg(2+). The active site involves Asp-45. Positions 114 and 117 each coordinate Mg(2+). Glu-117 is an active-site residue. The DRBM domain occupies 155-225 (DPKTRLQEFL…AEQALKKLEL (71 aa)).

The protein belongs to the ribonuclease III family. As to quaternary structure, homodimer. Requires Mg(2+) as cofactor.

It is found in the cytoplasm. It carries out the reaction Endonucleolytic cleavage to 5'-phosphomonoester.. In terms of biological role, digests double-stranded RNA. Involved in the processing of primary rRNA transcript to yield the immediate precursors to the large and small rRNAs (23S and 16S). Processes some mRNAs, and tRNAs when they are encoded in the rRNA operon. Processes pre-crRNA and tracrRNA of type II CRISPR loci if present in the organism. This is Ribonuclease 3 from Pectobacterium carotovorum subsp. carotovorum (strain PC1).